A 178-amino-acid polypeptide reads, in one-letter code: Ribosome maturation factor RimM (178 aa).

The region spanning 99-178 (EGDYYWHDLI…TIEVDWDAGF (80 aa)) is the PRC barrel domain.

It belongs to the RimM family. In terms of assembly, binds ribosomal protein uS19.

It is found in the cytoplasm. Functionally, an accessory protein needed during the final step in the assembly of 30S ribosomal subunit, possibly for assembly of the head region. Essential for efficient processing of 16S rRNA. May be needed both before and after RbfA during the maturation of 16S rRNA. It has affinity for free ribosomal 30S subunits but not for 70S ribosomes. This chain is Ribosome maturation factor RimM, found in Haemophilus influenzae (strain ATCC 51907 / DSM 11121 / KW20 / Rd).